A 248-amino-acid polypeptide reads, in one-letter code: PF03932 family protein CutC (248 aa).

The protein belongs to the CutC family. Homodimer.

Its subcellular location is the cytoplasm. This Salmonella paratyphi B (strain ATCC BAA-1250 / SPB7) protein is PF03932 family protein CutC.